The following is an 850-amino-acid chain: Response regulator sskA (850 aa).

2 disordered regions span residues methionine 1 to serine 225 and isoleucine 419 to proline 542. The span at serine 7–serine 25 shows a compositional bias: low complexity. The segment covering glycine 117–arginine 138 has biased composition (polar residues). Positions glutamine 144–glycine 163 are enriched in basic and acidic residues. The segment covering serine 177 to threonine 196 has biased composition (polar residues). Residues histidine 436 to glutamate 445 are compositionally biased toward basic and acidic residues. The segment covering proline 477–serine 490 has biased composition (polar residues). A compositionally biased stretch (pro residues) spans proline 492–serine 511. A Response regulatory domain is found at asparagine 558–glycine 719. Residue aspartate 607 is modified to 4-aspartylphosphate. A disordered region spans residues phenylalanine 736–threonine 850. A compositionally biased stretch (low complexity) spans serine 762–alanine 782. Over residues threonine 819–threonine 828 the composition is skewed to polar residues. The span at proline 839 to threonine 850 shows a compositional bias: acidic residues.

The protein belongs to the SSK1 family.

Its subcellular location is the cytoplasm. In terms of biological role, final receptor of the osmolarity two-component system regulatory system, which controls activity of the sakA mitogen-activated protein kinase (MAPK) pathway in response to changes in the osmolarity of the extracellular environment. Regulates the germination in the airways that drives enhanced disease initiation and inflammation in the lungs. The protein is Response regulator sskA of Aspergillus fumigatus (strain ATCC MYA-4609 / CBS 101355 / FGSC A1100 / Af293) (Neosartorya fumigata).